A 303-amino-acid chain; its full sequence is 2-dehydropantoate 2-reductase (303 aa).

Residues 7–12 (GCGALG), Asn-98, and Ala-122 contribute to the NADP(+) site. Asn-98 contributes to the substrate binding site. The active-site Proton donor is the Lys-176. 4 residues coordinate substrate: Asn-180, Asn-184, Asn-194, and Ser-244. NADP(+) is bound at residue Glu-256.

This sequence belongs to the ketopantoate reductase family. As to quaternary structure, monomer.

It is found in the cytoplasm. The catalysed reaction is (R)-pantoate + NADP(+) = 2-dehydropantoate + NADPH + H(+). Its pathway is cofactor biosynthesis; (R)-pantothenate biosynthesis; (R)-pantoate from 3-methyl-2-oxobutanoate: step 2/2. Catalyzes the NADPH-dependent reduction of ketopantoate into pantoic acid. In Shigella flexneri, this protein is 2-dehydropantoate 2-reductase (panE).